Here is a 267-residue protein sequence, read N- to C-terminus: MTYFEAFFLALLQGFTEFLPISSSAHLILPSAILGWPDQGLAFDVAVHVGTLAAVVIYFRKEVVTLLTAWVGSIVKKEHNKESNLAWLIVLATIPAALFGLLFKDFIEIYLRSAWVIAATTIVFGLLLWWVDKNATLAKDEYQMTWKKALFLGIAQAMAMIPGTSRSGITITAALYLGFTREAAARFSFLMSIPIITLAGSYLGLKLAMSDISIHLGLLSTGVIVSFISAYICIHFFLKLISSMGMMPFVIYRILLGSSLLVWLALH.

8 helical membrane-spanning segments follow: residues 1–21 (MTYFEAFFLALLQGFTEFLPI), 39–59 (QGLAFDVAVHVGTLAAVVIYF), 83–103 (SNLAWLIVLATIPAALFGLLF), 111–131 (LRSAWVIAATTIVFGLLLWWV), 149–169 (ALFLGIAQAMAMIPGTSRSGI), 189–209 (FLMSIPIITLAGSYLGLKLAM), 218–238 (LLSTGVIVSFISAYICIHFFL), and 246–266 (MMPFVIYRILLGSSLLVWLAL).

It belongs to the UppP family.

Its subcellular location is the cell inner membrane. It catalyses the reaction di-trans,octa-cis-undecaprenyl diphosphate + H2O = di-trans,octa-cis-undecaprenyl phosphate + phosphate + H(+). Its function is as follows. Catalyzes the dephosphorylation of undecaprenyl diphosphate (UPP). Confers resistance to bacitracin. In Aliivibrio fischeri (strain MJ11) (Vibrio fischeri), this protein is Undecaprenyl-diphosphatase.